The sequence spans 156 residues: Anaerobic nitrite reductase HB2 (156 aa).

The Globin domain occupies 2-151 (GFTDKQEALV…LASAIKAEMH (150 aa)). The Homodimerization signature appears at 35–39 (EIAPV). Positions 45, 59, 63, and 98 each coordinate heme b. The Homodimerization motif lies at 105-117 (DPHFEVVKEALLR).

Belongs to the plant globin family. As to quaternary structure, homodimer. The cofactor is heme b.

The protein resides in the cytoplasm. Its subcellular location is the nucleus. The enzyme catalyses Fe(III)-heme b-[protein] + nitric oxide + H2O = Fe(II)-heme b-[protein] + nitrite + 2 H(+). Phytoglobin that reduces nitrite to nitric oxide (NO) under anoxic conditions (e.g. during flooding or in waterlogged soil). May not function as an oxygen storage or transport protein. Has an unusually high affinity for O(2) through an hexacoordinate heme iron because of a very low dissociation constant. In Solanum lycopersicum (Tomato), this protein is Anaerobic nitrite reductase HB2.